Consider the following 362-residue polypeptide: Glycyl-glycine endopeptidase ALE-1 (362 aa).

An N-terminal signal peptide occupies residues M1–A35. The interval A35 to E110 is disordered. The span at D40–E110 shows a compositional bias: basic and acidic residues. Zn(2+)-binding residues include H150 and D154. Residue H231 is part of the active site. Residue H233 coordinates Zn(2+). Residues S282 to S350 form the SH3b domain.

Belongs to the peptidase M23B family. The cofactor is Zn(2+).

Its subcellular location is the secreted. It catalyses the reaction Hydrolysis of the -Gly-|-Gly- bond in the pentaglycine inter-peptide link joining staphylococcal cell wall peptidoglycans.. Functionally, lyses staphylococcal cells by hydrolyzing the polyglycine interpeptide bridges of the peptidoglycan. In Staphylococcus capitis, this protein is Glycyl-glycine endopeptidase ALE-1.